Reading from the N-terminus, the 484-residue chain is Serine hydroxymethyltransferase, cytosolic (484 aa).

At Ala-2 the chain carries N-acetylalanine. Asn-6 carries the deamidated asparagine; alternate modification. A cross-link (isoaspartyl glycine isopeptide (Asn-Gly); alternate) is located at residues 6–7; sequence NG. The active-site Nucleophile is the Cys-204. His-256 (proton donor) is an active-site residue. Lys-257 is subject to N6-(pyridoxal phosphate)lysine.

The protein belongs to the SHMT family. In terms of assembly, homotetramer. Identified in complex with ABRAXAS2 and the other subunits of the BRISC complex, at least composed of ABRAXAS2, BRCC3/BRCC36, BABAM2 and BABAM1/NBA1. Requires pyridoxal 5'-phosphate as cofactor. Post-translationally, deamidation of asparagine produces alternatively aspartate or isoaspartate, which in turn can be converted to aspartate through carboxylmethylation/demethylation.

It is found in the cytoplasm. It catalyses the reaction (6R)-5,10-methylene-5,6,7,8-tetrahydrofolate + glycine + H2O = (6S)-5,6,7,8-tetrahydrofolate + L-serine. The protein operates within one-carbon metabolism; tetrahydrofolate interconversion. Functionally, interconversion of serine and glycine. This Oryctolagus cuniculus (Rabbit) protein is Serine hydroxymethyltransferase, cytosolic (SHMT1).